Reading from the N-terminus, the 703-residue chain is Protein FAR1-RELATED SEQUENCE 6 (703 aa).

A disordered region spans residues Met1–Met29. The FAR1 domain maps to Asn99 to Cys184. Positions Val297 to Pro392 constitute an MULE domain. An SWIM-type zinc finger spans residues Phe584 to Gly620.

The protein belongs to the FHY3/FAR1 family. Expressed in hypocotyls, rosette and cauline leaves, inflorescences stems, flowers and siliques.

Its subcellular location is the nucleus. Functionally, putative transcription activator involved in regulating light control of development. May have a role in controlling flowering time. The sequence is that of Protein FAR1-RELATED SEQUENCE 6 (FRS6) from Arabidopsis thaliana (Mouse-ear cress).